We begin with the raw amino-acid sequence, 420 residues long: Serine--tRNA ligase (420 aa).

Residue Thr-229 to Glu-231 coordinates L-serine. ATP is bound at residue Arg-260–Glu-262. Glu-283 is an L-serine binding site. An ATP-binding site is contributed by Glu-347–Ser-350. Residue Ser-382 coordinates L-serine.

This sequence belongs to the class-II aminoacyl-tRNA synthetase family. Type-1 seryl-tRNA synthetase subfamily. As to quaternary structure, homodimer. The tRNA molecule binds across the dimer.

It is found in the cytoplasm. The catalysed reaction is tRNA(Ser) + L-serine + ATP = L-seryl-tRNA(Ser) + AMP + diphosphate + H(+). The enzyme catalyses tRNA(Sec) + L-serine + ATP = L-seryl-tRNA(Sec) + AMP + diphosphate + H(+). It participates in aminoacyl-tRNA biosynthesis; selenocysteinyl-tRNA(Sec) biosynthesis; L-seryl-tRNA(Sec) from L-serine and tRNA(Sec): step 1/1. Catalyzes the attachment of serine to tRNA(Ser). Is also able to aminoacylate tRNA(Sec) with serine, to form the misacylated tRNA L-seryl-tRNA(Sec), which will be further converted into selenocysteinyl-tRNA(Sec). This Caldicellulosiruptor saccharolyticus (strain ATCC 43494 / DSM 8903 / Tp8T 6331) protein is Serine--tRNA ligase.